Consider the following 130-residue polypeptide: Small ribosomal subunit protein uS8 (130 aa).

This sequence belongs to the universal ribosomal protein uS8 family. Part of the 30S ribosomal subunit. Contacts proteins S5 and S12.

Functionally, one of the primary rRNA binding proteins, it binds directly to 16S rRNA central domain where it helps coordinate assembly of the platform of the 30S subunit. The protein is Small ribosomal subunit protein uS8 of Aliivibrio fischeri (strain ATCC 700601 / ES114) (Vibrio fischeri).